Consider the following 44-residue polypeptide: uncharacterized protein (44 aa).

This is an uncharacterized protein from His1 virus (isolate Australia/Victoria) (His1V).